We begin with the raw amino-acid sequence, 792 residues long: Host cell factor 2 (792 aa).

4 Kelch repeats span residues 34 to 79 (LMII…GFVC), 83 to 130 (RILV…RLGH), 207 to 255 (KMYV…VIGN), and 257 to 303 (MYIF…VSDS). One can recognise a Fibronectin type-III 1 domain in the interval 359–449 (APSQVQLIKA…QPATKETSMK (91 aa)). Residues 399-447 (ASSDSSAAPNMQGVRMDPHRQGSNNIVPNSINDTINSTKTEQPATKETS) are disordered. Positions 419-445 (QGSNNIVPNSINDTINSTKTEQPATKE) are enriched in polar residues. A Glycyl lysine isopeptide (Lys-Gly) (interchain with G-Cter in SUMO2) cross-link involves residue lysine 553. Fibronectin type-III domains are found at residues 583 to 675 (TPSN…TCIP) and 677 to 787 (FPGA…GNNK).

As to quaternary structure, binds KMT2A/MLL1. Component of the MLL1/MLL complex, at least composed of KMT2A/MLL1, ASH2L, RBBP5, DPY30, WDR5, MEN1, HCFC1 and HCFC2. Interacts with TASOR. In terms of tissue distribution, highly expressed in testis. Detected at lower levels in spleen, thymus, prostate, ovary, small intestine and colon.

It is found in the cytoplasm. Its subcellular location is the nucleus. The polypeptide is Host cell factor 2 (HCFC2) (Homo sapiens (Human)).